The following is a 640-amino-acid chain: Probable potassium transport system protein Kup 2 (640 aa).

12 helical membrane passes run 19–39 (LFSSTTFLLALGSLGVVYGDI), 67–87 (VLSLVFWSMTMVICVKYVVFV), 118–138 (GVVAFAATLGASLLYGDGVIT), 155–175 (EAAKPLVVPLTCVVLLALFLV), 181–201 (GVIGNVFGPIMIVWFVTIAAL), 230–250 (FVGVVVLGSVVLCITGGEALY), 265–285 (WLGLAFPALLLNYFGQGALLL), 307–327 (MVCLSTIATVIASQAMISGVF), 355–375 (VYIPEVNYLLMIACLGLVLVF), 384–404 (AYGIAVTADMALTSILFFFVI), 415–435 (AVPLLVLFLFFDLSYFGANLF), and 437–457 (IFDGGWITLTIAAIVATSMIT).

This sequence belongs to the HAK/KUP transporter (TC 2.A.72) family.

The protein resides in the cell inner membrane. It carries out the reaction K(+)(in) + H(+)(in) = K(+)(out) + H(+)(out). Transport of potassium into the cell. Likely operates as a K(+):H(+) symporter. The sequence is that of Probable potassium transport system protein Kup 2 from Syntrophobacter fumaroxidans (strain DSM 10017 / MPOB).